A 491-amino-acid polypeptide reads, in one-letter code: Meiosis-specific nuclear structural protein 1 (491 aa).

Residues 1–314 form an interaction with BBOF1 region; it reads MATKKRALSF…QLEETLRQRD (314 aa). Coiled-coil stretches lie at residues 29-253 and 287-410; these read QVMN…RAQD and RVHE…AVEK. The residue at position 188 (tyrosine 188) is a Phosphotyrosine.

This sequence belongs to the MNS1 family. In terms of assembly, able to form oligomers. Microtubule inner protein component of sperm flagellar doublet microtubules. Interacts with ODAD1. Interacts with BBOF1. High expression in testis. Expressed in pachytene spermatocytes and post-meiotic spermatids.

The protein resides in the nucleus. The protein localises to the cytoplasm. It is found in the cytoskeleton. Its subcellular location is the flagellum axoneme. It localises to the cilium axoneme. Its function is as follows. Microtubule inner protein (MIP) part of the dynein-decorated doublet microtubules (DMTs) in cilia axoneme, which is required for motile cilia beating. May play a role in the control of meiotic division and germ cell differentiation through regulation of pairing and recombination during meiosis. Required for sperm flagella assembly. May play a role in the assembly and function of the outer dynein arm-docking complex (ODA-DC). ODA-DC mediates outer dynein arms (ODA) binding onto the axonemal doublet microtubules. This is Meiosis-specific nuclear structural protein 1 (Mns1) from Mus musculus (Mouse).